Here is a 333-residue protein sequence, read N- to C-terminus: NADH-quinone oxidoreductase subunit H (333 aa).

The next 8 helical transmembrane spans lie at 8 to 28 (VLAA…YLVW), 75 to 95 (ILFM…FVTI), 108 to 128 (IGLL…LLAG), 154 to 174 (MLIT…IEIV), 191 to 211 (PGLF…CSLA), 251 to 271 (IVIG…CPFG), 273 to 293 (FPGV…FIWI), and 312 to 332 (ILIP…KVFA).

The protein belongs to the complex I subunit 1 family. As to quaternary structure, NDH-1 is composed of 14 different subunits. Subunits NuoA, H, J, K, L, M, N constitute the membrane sector of the complex.

Its subcellular location is the cell inner membrane. It carries out the reaction a quinone + NADH + 5 H(+)(in) = a quinol + NAD(+) + 4 H(+)(out). NDH-1 shuttles electrons from NADH, via FMN and iron-sulfur (Fe-S) centers, to quinones in the respiratory chain. The immediate electron acceptor for the enzyme in this species is believed to be ubiquinone. Couples the redox reaction to proton translocation (for every two electrons transferred, four hydrogen ions are translocated across the cytoplasmic membrane), and thus conserves the redox energy in a proton gradient. This subunit may bind ubiquinone. In Desulfotalea psychrophila (strain LSv54 / DSM 12343), this protein is NADH-quinone oxidoreductase subunit H.